Here is a 652-residue protein sequence, read N- to C-terminus: RNA-binding E3 ubiquitin-protein ligase MEX3C (652 aa).

Disordered stretches follow at residues 15-39 and 80-136; these read AAPA…ELEG and QARR…EDRP. Over residues 18–33 the composition is skewed to pro residues; it reads APLPQPPPLPPPPPAG. The segment covering 101–134 has biased composition (acidic residues); it reads AELELEVDEEEGEEAELDGELLEEEELEEAEEED. KH domains lie at 225-286 and 319-380; these read TTEC…KREI and QTTV…REEI. Disordered regions lie at residues 429 to 448 and 506 to 566; these read ARMM…SGST and FEPV…HVGL. Over residues 430-448 the composition is skewed to low complexity; that stretch reads RMMSNYRNDSSSSLGSGST. Over residues 519-537 the composition is skewed to polar residues; sequence PSGNMKTQRRGSQPSTPRL. A phosphoserine mark is found at serine 530 and serine 538. Basic and acidic residues predominate over residues 544–555; the sequence is SIEHPLARRVRS. The segment at 601 to 641 adopts an RING-type zinc-finger fold; it reads CVICFENEVIAALVPCGHNLFCMECANKICEKRTPSCPVCQ.

As to quaternary structure, interacts with USP7, which antagonizes the ability to degrade mRNA. Phosphorylated.

It is found in the nucleus. It localises to the cytoplasm. It carries out the reaction S-ubiquitinyl-[E2 ubiquitin-conjugating enzyme]-L-cysteine + [acceptor protein]-L-lysine = [E2 ubiquitin-conjugating enzyme]-L-cysteine + N(6)-ubiquitinyl-[acceptor protein]-L-lysine.. Functionally, RNA-binding protein. May be involved in post-transcriptional regulatory mechanisms, modulating levels of some mRNAs by promoting their degradation in a way involving ubiquitin ligase activity. May act as suppressor of replication stress and chromosome missegregation. This Mus musculus (Mouse) protein is RNA-binding E3 ubiquitin-protein ligase MEX3C (Mex3c).